We begin with the raw amino-acid sequence, 646 residues long: NADP-dependent malic enzyme 4, chloroplastic (646 aa).

A chloroplast-targeting transit peptide spans 1 to 74; sequence MISLTPSLFL…LETSAADIVP (74 aa). The active-site Proton donor is Tyr194. An NADP(+)-binding site is contributed by Arg247. Lys265 functions as the Proton acceptor in the catalytic mechanism. Glu337, Asp338, and Asp361 together coordinate a divalent metal cation. NADP(+) contacts are provided by residues Asp361, 390-406, and Asn502; that span reads LFLG…ELIA.

Belongs to the malic enzymes family. In terms of assembly, homodimer and homotetramer. Mg(2+) serves as cofactor. Mn(2+) is required as a cofactor. In terms of tissue distribution, expressed in leaves, stems, flowers and roots, mainly in vascular system. In roots, present in the stele, including the vascular tissue and the pericycle, mainly at emerging lateral roots and at root tips.

It is found in the plastid. The protein localises to the chloroplast. It catalyses the reaction (S)-malate + NADP(+) = pyruvate + CO2 + NADPH. It carries out the reaction oxaloacetate + H(+) = pyruvate + CO2. Its pathway is photosynthesis; C3 acid pathway. The chloroplastic ME isoform decarboxylates malate shuttled from neighboring mesophyll cells. The CO(2) released is then refixed by ribulose-bisphosphate carboxylase. This pathway eliminates the photorespiratory loss of CO(2) that occurs in most plants. The polypeptide is NADP-dependent malic enzyme 4, chloroplastic (NADP-ME4) (Arabidopsis thaliana (Mouse-ear cress)).